The chain runs to 351 residues: Protein Wnt-8a (351 aa).

The signal sequence occupies residues 1–24; it reads MGNLFMLWAALGICCAAFSASAWS. A disulfide bridge links C54 with C65. N103 carries an N-linked (GlcNAc...) asparagine glycan. Disulfide bonds link C104-C112, C114-C132, C180-C194, C182-C189, C259-C297, C275-C290, C294-C336, C312-C327, C314-C324, and C319-C320. Residue S186 is the site of O-palmitoleoyl serine attachment. N262 and N281 each carry an N-linked (GlcNAc...) asparagine glycan.

The protein belongs to the Wnt family. As to quaternary structure, forms a soluble 1:1 complex with AFM; this prevents oligomerization and is required for prolonged biological activity. The complex with AFM may represent the physiological form in body fluids. Palmitoleoylation is required for efficient binding to frizzled receptors. Depalmitoleoylation leads to Wnt signaling pathway inhibition. Post-translationally, proteolytic processing by TIKI1 and TIKI2 promotes oxidation and formation of large disulfide-bond oligomers, leading to inactivation of WNT8A.

The protein localises to the secreted. Its subcellular location is the extracellular space. The protein resides in the extracellular matrix. In terms of biological role, ligand for members of the frizzled family of seven transmembrane receptors. Plays a role in embryonic patterning. This Homo sapiens (Human) protein is Protein Wnt-8a (WNT8A).